The following is an 82-amino-acid chain: Sec-independent protein translocase protein TatA (82 aa).

A helical transmembrane segment spans residues 2–22 (GFGGISLWQLLIVLAIIVLLF). The disordered stretch occupies residues 43–82 (KAMSDEKNTDKEKPEQIQKSEESAPLDSAHTEKNKDNNKV). Composition is skewed to basic and acidic residues over residues 44–64 (AMSD…KSEE) and 71–82 (AHTEKNKDNNKV).

It belongs to the TatA/E family. As to quaternary structure, the Tat system comprises two distinct complexes: a TatABC complex, containing multiple copies of TatA, TatB and TatC subunits, and a separate TatA complex, containing only TatA subunits. Substrates initially bind to the TatABC complex, which probably triggers association of the separate TatA complex to form the active translocon.

Its subcellular location is the cell inner membrane. Part of the twin-arginine translocation (Tat) system that transports large folded proteins containing a characteristic twin-arginine motif in their signal peptide across membranes. TatA could form the protein-conducting channel of the Tat system. This chain is Sec-independent protein translocase protein TatA, found in Pseudoalteromonas translucida (strain TAC 125).